A 242-amino-acid chain; its full sequence is ATP-dependent dethiobiotin synthetase BioD (242 aa).

Residue 12-17 (EVGKTV) coordinates ATP. Thr16 is a Mg(2+) binding site. Residue Lys37 is part of the active site. Ser41 is a binding site for substrate. Residues Asp51 and 112-115 (EGAG) contribute to the ATP site. Residues Asp51 and Glu112 each coordinate Mg(2+).

This sequence belongs to the dethiobiotin synthetase family. Homodimer. Mg(2+) is required as a cofactor.

It is found in the cytoplasm. The enzyme catalyses (7R,8S)-7,8-diammoniononanoate + CO2 + ATP = (4R,5S)-dethiobiotin + ADP + phosphate + 3 H(+). The protein operates within cofactor biosynthesis; biotin biosynthesis; biotin from 7,8-diaminononanoate: step 1/2. Functionally, catalyzes a mechanistically unusual reaction, the ATP-dependent insertion of CO2 between the N7 and N8 nitrogen atoms of 7,8-diaminopelargonic acid (DAPA, also called 7,8-diammoniononanoate) to form a ureido ring. This Bacillus cereus (strain ATCC 14579 / DSM 31 / CCUG 7414 / JCM 2152 / NBRC 15305 / NCIMB 9373 / NCTC 2599 / NRRL B-3711) protein is ATP-dependent dethiobiotin synthetase BioD.